We begin with the raw amino-acid sequence, 491 residues long: Lysine--tRNA ligase (491 aa).

Residues E400 and E407 each contribute to the Mg(2+) site.

This sequence belongs to the class-II aminoacyl-tRNA synthetase family. As to quaternary structure, homodimer. Requires Mg(2+) as cofactor.

Its subcellular location is the cytoplasm. The enzyme catalyses tRNA(Lys) + L-lysine + ATP = L-lysyl-tRNA(Lys) + AMP + diphosphate. This Mesomycoplasma hyopneumoniae (strain J / ATCC 25934 / NCTC 10110) (Mycoplasma hyopneumoniae) protein is Lysine--tRNA ligase.